The sequence spans 947 residues: MTPLSSPLSQYWQTVVERLPEGFTETSLSVQAKSVLTFSDFALDSVIAHPEWLAELESASPQADEWRHYAGWLQEALAGVCDDASLMRELRFFRRRIMVRIAWAQTLSLVDDETILQQLSHLAETLIVGARDWLYAACCREWGTPCNPQGVPQPLLILGMGKLGGGELNFSSDIDLIFAWPEHGETRGGRRELDNAQFFTRLGQRLIKALDQPTMDGFVYRVDMRLRPFGDSGPLVLSFAALEDYYQEQGRDWERYAMVKARLMGDNDDAWSRELRAMLRPFVFRRYIDFSVIQSLRNMKGMIAREVRRRGLKDNIKLGAGGIREIEFIVQVFQLIRGGREPSLQSRSLLPTLDAIAALHLLPENDVAQLRVAYLFLRRLENLLQSINDEQTQTLPADDLNRARLAWGMKAENWPQLVGELTDHMANVRRVFNELIGDDEADTPQEEERSEPWREVWQDALQEDDSTPVLAHLADEDRRQVLTLIADFRKELDKRPIGPRGRQVLDQLMPHLLADVCSREDAAVTLSRITPLLAGIVTRTTYLELLSEFPGALKHLIMLCAASPMIASQLARYPLLLDELLDPGTLYQPTATDAYRDELRQYLLRVPEEDEEQQLEALRQFKQAQLLRIAAADIAGTLPVMKVSDHLTWLAEAMIDAVVQQAWTQMVARYGQPAHLDERQGRGFAVVGYGKLGGWELGYSSDLDLIFLHDCPMDVMTNGEREIDGRQFYLRLAQRIMHLFSTRTSSGILYEVDARLRPSGAAGMLVTSADAFADYQQHEAWTWEHQALVRARVVYGDPQLTSQFDTVRRTIMTTARDGKTLQTEVREMREKMRAHLGNKHRDRFDIKADEGGITDIEFIAQYLVLRYAHEKPKLTRWSDNVRILELLAQNGIMDEHEAQALTVAYTTLRDELHHLALQELPGHVAQTCFSKERALVQASWRKWLVAV.

Residues 1–440 (MTPLSSPLSQ…VFNELIGDDE (440 aa)) are adenylyl removase. An adenylyl transferase region spans residues 450–947 (SEPWREVWQD…ASWRKWLVAV (498 aa)).

This sequence belongs to the GlnE family. The cofactor is Mg(2+).

It carries out the reaction [glutamine synthetase]-O(4)-(5'-adenylyl)-L-tyrosine + phosphate = [glutamine synthetase]-L-tyrosine + ADP. It catalyses the reaction [glutamine synthetase]-L-tyrosine + ATP = [glutamine synthetase]-O(4)-(5'-adenylyl)-L-tyrosine + diphosphate. Involved in the regulation of glutamine synthetase GlnA, a key enzyme in the process to assimilate ammonia. When cellular nitrogen levels are high, the C-terminal adenylyl transferase (AT) inactivates GlnA by covalent transfer of an adenylyl group from ATP to specific tyrosine residue of GlnA, thus reducing its activity. Conversely, when nitrogen levels are low, the N-terminal adenylyl removase (AR) activates GlnA by removing the adenylyl group by phosphorolysis, increasing its activity. The regulatory region of GlnE binds the signal transduction protein PII (GlnB) which indicates the nitrogen status of the cell. The chain is Bifunctional glutamine synthetase adenylyltransferase/adenylyl-removing enzyme from Salmonella gallinarum (strain 287/91 / NCTC 13346).